Reading from the N-terminus, the 598-residue chain is Aspartate--tRNA(Asp/Asn) ligase (598 aa).

Glu-172 serves as a coordination point for L-aspartate. Residues 196–199 (QLFK) form an aspartate region. Arg-218 serves as a coordination point for L-aspartate. ATP-binding positions include 218–220 (RDE) and Gln-227. His-455 serves as a coordination point for L-aspartate. Residue Glu-489 participates in ATP binding. Position 496 (Arg-496) interacts with L-aspartate. 541-544 (GLDR) contacts ATP.

Belongs to the class-II aminoacyl-tRNA synthetase family. Type 1 subfamily. As to quaternary structure, homodimer.

It is found in the cytoplasm. The enzyme catalyses tRNA(Asx) + L-aspartate + ATP = L-aspartyl-tRNA(Asx) + AMP + diphosphate. Aspartyl-tRNA synthetase with relaxed tRNA specificity since it is able to aspartylate not only its cognate tRNA(Asp) but also tRNA(Asn). Reaction proceeds in two steps: L-aspartate is first activated by ATP to form Asp-AMP and then transferred to the acceptor end of tRNA(Asp/Asn). The chain is Aspartate--tRNA(Asp/Asn) ligase from Burkholderia mallei (strain ATCC 23344).